The primary structure comprises 77 residues: Translation initiation factor IF-1, chloroplastic (77 aa).

The S1-like domain maps to 1–71 (MKEQKWIHEG…TRGRIIYRLR (71 aa)).

This sequence belongs to the IF-1 family. In terms of assembly, component of the 30S ribosomal translation pre-initiation complex which assembles on the 30S ribosome in the order IF-2 and IF-3, IF-1 and N-formylmethionyl-tRNA(fMet); mRNA recruitment can occur at any time during PIC assembly.

Its subcellular location is the plastid. The protein localises to the chloroplast. In terms of biological role, one of the essential components for the initiation of protein synthesis. Stabilizes the binding of IF-2 and IF-3 on the 30S subunit to which N-formylmethionyl-tRNA(fMet) subsequently binds. Helps modulate mRNA selection, yielding the 30S pre-initiation complex (PIC). Upon addition of the 50S ribosomal subunit IF-1, IF-2 and IF-3 are released leaving the mature 70S translation initiation complex. The protein is Translation initiation factor IF-1, chloroplastic of Montinia caryophyllacea (Wild clove bush).